Here is a 70-residue protein sequence, read N- to C-terminus: NADH dehydrogenase [ubiquinone] 1 alpha subcomplex subunit 1 (70 aa).

Residues 1 to 21 (MWFEILPGLSVMGVCLLIPGL) form a helical membrane-spanning segment.

The protein belongs to the complex I NDUFA1 subunit family. Complex I is composed of 45 different subunits. Primarily expressed in heart and skeletal muscle.

It is found in the mitochondrion inner membrane. In terms of biological role, accessory subunit of the mitochondrial membrane respiratory chain NADH dehydrogenase (Complex I), that is believed not to be involved in catalysis. Complex I functions in the transfer of electrons from NADH to the respiratory chain. The immediate electron acceptor for the enzyme is believed to be ubiquinone. This is NADH dehydrogenase [ubiquinone] 1 alpha subcomplex subunit 1 (NDUFA1) from Homo sapiens (Human).